The chain runs to 306 residues: Pyridoxal 5'-phosphate synthase subunit SNZERR (306 aa).

D34 is a binding site for D-ribose 5-phosphate. K91 functions as the Schiff-base intermediate with D-ribose 5-phosphate in the catalytic mechanism. G163 lines the D-ribose 5-phosphate pocket. R175 lines the D-glyceraldehyde 3-phosphate pocket. Residues G224 and 245-246 contribute to the D-ribose 5-phosphate site; that span reads GS.

Belongs to the PdxS/SNZ family.

The enzyme catalyses aldehydo-D-ribose 5-phosphate + D-glyceraldehyde 3-phosphate + L-glutamine = pyridoxal 5'-phosphate + L-glutamate + phosphate + 3 H2O + H(+). It participates in cofactor biosynthesis; pyridoxal 5'-phosphate biosynthesis. In terms of biological role, catalyzes the formation of pyridoxal 5'-phosphate from ribose 5-phosphate (RBP), glyceraldehyde 3-phosphate (G3P) and ammonia. The ammonia is provided by PDX2. Can also use ribulose 5-phosphate and dihydroxyacetone phosphate as substrates, resulting from enzyme-catalyzed isomerization of RBP and G3P, respectively. Also plays an indirect role in resistance to singlet oxygen-generating photosensitizers. The chain is Pyridoxal 5'-phosphate synthase subunit SNZERR (SNZERR) from Suberites domuncula (Sponge).